Reading from the N-terminus, the 670-residue chain is Protein ACCELERATED CELL DEATH 6 (670 aa).

The Cytoplasmic portion of the chain corresponds to 1-456 (MDSSGADLDR…PNYIFHERWT (456 aa)). The interval 18–47 (LVSHDQRKDFSHSGGVGTTSPTGDTEPVPK) is disordered. ANK repeat units lie at residues 66–95 (EMTP…PMER), 100–129 (TGDS…CLLF), 134–163 (SRQT…SALA), 182–211 (DGNT…DAPF), 216–248 (KGIS…NVDR), 260–290 (QGNK…SLMD), 295–325 (DGRT…GVYV), 329–358 (DGSF…ASKY), 363–391 (LGQN…DTKH), and 399–428 (DGNT…EILK). The chain crosses the membrane as a helical span at residues 457-477 (LALLLYAIHSSGFESVKSLTI). The Extracellular portion of the chain corresponds to 478–492 (QSVPLDPKKNRHYVN). A helical transmembrane segment spans residues 493–513 (ALLVVAALVATVTFAAGFTIP). The Cytoplasmic segment spans residues 514–537 (GGYISDSKKPNLGRATLATNPTLF). The chain crosses the membrane as a helical span at residues 538–558 (IFLLFDILAMQSSVATICTLI). The Extracellular segment spans residues 559–577 (WAQLGDLALILKSLHVALP). Residues 578–598 (LLLFSLLCMPVAFLFGVITAI) form a helical membrane-spanning segment. The Cytoplasmic portion of the chain corresponds to 599–602 (AHVK). A helical membrane pass occupies residues 603–623 (WLLVTISIISGGFFLFAIFIL). Topologically, residues 624–638 (GPHVMLQRSHLPPSS) are extracellular. Residues 639–659 (GIFLKTFMLTIDISELFVILI) form a helical membrane-spanning segment. Residues 660-670 (KACFGCVACSE) lie on the Cytoplasmic side of the membrane.

As to quaternary structure, component of large complexes containing, at least, FLS2, HSP70 and ACD6 in endoplasmic reticulum, plasma membrane and soluble fraction. Associated with HSP70 proteins during endoplasmic reticulum-associated degradation (ERAD). Reduced complex levels upon benzothiazole (BTH) treatment. In terms of processing, ubiquitinated. In terms of tissue distribution, basal expression requires light and salicylic acid (SA).

It is found in the cell membrane. It localises to the endoplasmic reticulum membrane. In terms of biological role, dose-dependent activator of the defense response against virulent pathogens, including bacteria, fungi and oomycetes, that acts in a positive feedback loop with the defense signal salicylic acid (SA). Regulates the salicylic acid (SA) signaling pathway leading to cell death and modulating cell fate (e.g. cell enlargement and/or cell division). In response to SA signaling, triggers the accumulation of FLS2 at the plasma membrane, thus priming defenses. Involved in SA-dependent freezing signaling and tolerance. This Arabidopsis thaliana (Mouse-ear cress) protein is Protein ACCELERATED CELL DEATH 6.